Consider the following 817-residue polypeptide: LisH domain-containing protein ARMC9 (817 aa).

The LisH domain maps to 7–39 (HESELLGLVKEYLDFAEFEDTLKTFSKECKVKG). Residues 204-230 (GPNSKELLQQLHQQLVEAERRAMTYLK) are a coiled coil. Ser583 bears the Phosphoserine mark. Disordered regions lie at residues 637–659 (RKGPASVQWSGDEPLRRPVTPGG) and 761–817 (CKPQ…SIRK). Residues 765–774 (VPSTPETVEQ) show a composition bias toward polar residues. The segment covering 793-807 (PQQASRPASTASSTR) has biased composition (low complexity). The span at 808-817 (GLHSSQSIRK) shows a compositional bias: polar residues.

In terms of assembly, interacts with TOGARAM1, CCDC66, CEP104, CSPP1 and CEP290. Interacts with NDUFAF2.

The protein resides in the cytoplasm. Its subcellular location is the cytoskeleton. It is found in the cilium basal body. The protein localises to the cell projection. It localises to the cilium. The protein resides in the microtubule organizing center. Its subcellular location is the centrosome. It is found in the centriole. Its function is as follows. Involved in ciliogenesis. It is required for appropriate acetylation and polyglutamylation of ciliary microtubules, and regulation of cilium length. Acts as a positive regulator of hedgehog (Hh) signaling. May participate in the trafficking and/or retention of GLI2 and GLI3 proteins at the ciliary tip. This chain is LisH domain-containing protein ARMC9, found in Mus musculus (Mouse).